The following is a 451-amino-acid chain: Phosphoglucosamine mutase (451 aa).

The active-site Phosphoserine intermediate is serine 102. Positions 102, 242, 244, and 246 each coordinate Mg(2+). Phosphoserine is present on serine 102.

Belongs to the phosphohexose mutase family. Mg(2+) is required as a cofactor. In terms of processing, activated by phosphorylation.

It carries out the reaction alpha-D-glucosamine 1-phosphate = D-glucosamine 6-phosphate. Catalyzes the conversion of glucosamine-6-phosphate to glucosamine-1-phosphate. In Staphylococcus carnosus (strain TM300), this protein is Phosphoglucosamine mutase.